A 398-amino-acid chain; its full sequence is Dual-specificity RNA methyltransferase RlmN (398 aa).

Residue Glu-100 is the Proton acceptor of the active site. One can recognise a Radical SAM core domain in the interval 106–345 (DGDRGTLCVS…TTVRTTRGDD (240 aa)). The cysteines at positions 113 and 350 are disulfide-linked. Positions 120, 124, and 127 each coordinate [4Fe-4S] cluster. S-adenosyl-L-methionine-binding positions include 174–175 (GE), Ser-206, 228–230 (SLH), and Asn-307. Cys-350 (S-methylcysteine intermediate) is an active-site residue.

The protein belongs to the radical SAM superfamily. RlmN family. [4Fe-4S] cluster serves as cofactor.

It localises to the cytoplasm. It catalyses the reaction adenosine(2503) in 23S rRNA + 2 reduced [2Fe-2S]-[ferredoxin] + 2 S-adenosyl-L-methionine = 2-methyladenosine(2503) in 23S rRNA + 5'-deoxyadenosine + L-methionine + 2 oxidized [2Fe-2S]-[ferredoxin] + S-adenosyl-L-homocysteine. It carries out the reaction adenosine(37) in tRNA + 2 reduced [2Fe-2S]-[ferredoxin] + 2 S-adenosyl-L-methionine = 2-methyladenosine(37) in tRNA + 5'-deoxyadenosine + L-methionine + 2 oxidized [2Fe-2S]-[ferredoxin] + S-adenosyl-L-homocysteine. Specifically methylates position 2 of adenine 2503 in 23S rRNA and position 2 of adenine 37 in tRNAs. m2A2503 modification seems to play a crucial role in the proofreading step occurring at the peptidyl transferase center and thus would serve to optimize ribosomal fidelity. This Saccharophagus degradans (strain 2-40 / ATCC 43961 / DSM 17024) protein is Dual-specificity RNA methyltransferase RlmN.